The following is a 398-amino-acid chain: Signal-regulatory protein beta-1 isoform 3 (398 aa).

The first 29 residues, 1–29 (MPVPASWPHLPSPFLLMTLLLGRLTGVAG), serve as a signal peptide directing secretion. Topologically, residues 30-371 (EEELQVIQPD…GPALASAAPL (342 aa)) are extracellular. Residues 31–136 (EELQVIQPDK…SPDHVEFKSG (106 aa)) form the Ig-like V-type domain. Intrachain disulfides connect C54–C120 and C169–C227. Ig-like C1-type domains are found at residues 147 to 246 (PSAP…ANLS) and 253 to 347 (PTLE…HDLK). N-linked (GlcNAc...) asparagine glycosylation is found at N244, N291, and N318. C272 and C330 are joined by a disulfide. Positions 337–354 (QPAVSKSHDLKVSAHPKE) are enriched in basic and acidic residues. Positions 337–361 (QPAVSKSHDLKVSAHPKEQGSNTAP) are disordered. The chain crosses the membrane as a helical span at residues 372-392 (LIAFLLGPKVLLVVGVSVIYV). Over 393–398 (YWKQKA) the chain is Cytoplasmic.

The protein localises to the membrane. In terms of biological role, immunoglobulin-like cell surface receptor involved in the negative regulation of receptor tyrosine kinase-coupled signaling processes. The sequence is that of Signal-regulatory protein beta-1 isoform 3 (SIRPB1) from Homo sapiens (Human).